Reading from the N-terminus, the 159-residue chain is Deoxyuridine 5'-triphosphate nucleotidohydrolase (159 aa).

Residues 78 to 80 (RSG), Asn91, 95 to 97 (LID), and Met105 each bind substrate.

It belongs to the dUTPase family. It depends on Mg(2+) as a cofactor.

It carries out the reaction dUTP + H2O = dUMP + diphosphate + H(+). Its pathway is pyrimidine metabolism; dUMP biosynthesis; dUMP from dCTP (dUTP route): step 2/2. In terms of biological role, this enzyme is involved in nucleotide metabolism: it produces dUMP, the immediate precursor of thymidine nucleotides and it decreases the intracellular concentration of dUTP so that uracil cannot be incorporated into DNA. This chain is Deoxyuridine 5'-triphosphate nucleotidohydrolase, found in Buchnera aphidicola subsp. Schizaphis graminum (strain Sg).